Consider the following 486-residue polypeptide: Malonate-semialdehyde dehydrogenase (486 aa).

Residues Phe-154, Lys-178, Glu-181, Arg-182, and Ser-231 each coordinate NAD(+). Catalysis depends on Cys-286, which acts as the Nucleophile. Residue Glu-386 coordinates NAD(+).

This sequence belongs to the aldehyde dehydrogenase family. IolA subfamily. In terms of assembly, homotetramer.

The catalysed reaction is 3-oxopropanoate + NAD(+) + CoA + H2O = hydrogencarbonate + acetyl-CoA + NADH + H(+). It carries out the reaction 2-methyl-3-oxopropanoate + NAD(+) + CoA + H2O = propanoyl-CoA + hydrogencarbonate + NADH + H(+). Its pathway is polyol metabolism; myo-inositol degradation into acetyl-CoA; acetyl-CoA from myo-inositol: step 7/7. Functionally, catalyzes the oxidation of malonate semialdehyde (MSA) and methylmalonate semialdehyde (MMSA) into acetyl-CoA and propanoyl-CoA, respectively. Is involved in a myo-inositol catabolic pathway. Bicarbonate, and not CO2, is the end-product of the enzymatic reaction. This chain is Malonate-semialdehyde dehydrogenase, found in Bacillus cereus (strain ATCC 10987 / NRS 248).